The sequence spans 156 residues: 6,7-dimethyl-8-ribityllumazine synthase (156 aa).

Residues F24, 58–60, and 82–84 each bind 5-amino-6-(D-ribitylamino)uracil; these read AFE and VII. 87 to 88 contributes to the (2S)-2-hydroxy-3-oxobutyl phosphate binding site; that stretch reads ST. H90 functions as the Proton donor in the catalytic mechanism. Residue F115 coordinates 5-amino-6-(D-ribitylamino)uracil. R129 serves as a coordination point for (2S)-2-hydroxy-3-oxobutyl phosphate.

Belongs to the DMRL synthase family.

The catalysed reaction is (2S)-2-hydroxy-3-oxobutyl phosphate + 5-amino-6-(D-ribitylamino)uracil = 6,7-dimethyl-8-(1-D-ribityl)lumazine + phosphate + 2 H2O + H(+). It functions in the pathway cofactor biosynthesis; riboflavin biosynthesis; riboflavin from 2-hydroxy-3-oxobutyl phosphate and 5-amino-6-(D-ribitylamino)uracil: step 1/2. Catalyzes the formation of 6,7-dimethyl-8-ribityllumazine by condensation of 5-amino-6-(D-ribitylamino)uracil with 3,4-dihydroxy-2-butanone 4-phosphate. This is the penultimate step in the biosynthesis of riboflavin. The polypeptide is 6,7-dimethyl-8-ribityllumazine synthase (Chlorobaculum parvum (strain DSM 263 / NCIMB 8327) (Chlorobium vibrioforme subsp. thiosulfatophilum)).